The sequence spans 102 residues: uncharacterized protein (102 aa).

The helical transmembrane segment at 77-96 (FFSACVAKSYSSFFISICIL) threads the bilayer.

The protein localises to the membrane. This is an uncharacterized protein from Saccharomyces cerevisiae (strain ATCC 204508 / S288c) (Baker's yeast).